A 648-amino-acid chain; its full sequence is Macrolide export ATP-binding/permease protein MacB (648 aa).

An ABC transporter domain is found at 5–243; that stretch reads LELKDIRRSY…AGGTEPVVNT (239 aa). 41–48 serves as a coordination point for ATP; sequence GASGSGKS. Helical transmembrane passes span 273–293, 523–543, 576–596, and 600–620; these read LLTM…VVVG, LFLT…VMNI, AVLV…LIAF, and LFLP…AFLC.

The protein belongs to the ABC transporter superfamily. Macrolide exporter (TC 3.A.1.122) family. As to quaternary structure, homodimer. Part of the tripartite efflux system MacAB-TolC, which is composed of an inner membrane transporter, MacB, a periplasmic membrane fusion protein, MacA, and an outer membrane component, TolC. The complex forms a large protein conduit and can translocate molecules across both the inner and outer membranes. Interacts with MacA.

The protein resides in the cell inner membrane. Part of the tripartite efflux system MacAB-TolC. MacB is a non-canonical ABC transporter that contains transmembrane domains (TMD), which form a pore in the inner membrane, and an ATP-binding domain (NBD), which is responsible for energy generation. Confers resistance against macrolides. The protein is Macrolide export ATP-binding/permease protein MacB of Shigella sonnei (strain Ss046).